Reading from the N-terminus, the 510-residue chain is Glycogen synthase (510 aa).

Lysine 18 serves as a coordination point for ADP-alpha-D-glucose.

This sequence belongs to the glycosyltransferase 1 family. Bacterial/plant glycogen synthase subfamily.

It carries out the reaction [(1-&gt;4)-alpha-D-glucosyl](n) + ADP-alpha-D-glucose = [(1-&gt;4)-alpha-D-glucosyl](n+1) + ADP + H(+). It functions in the pathway glycan biosynthesis; glycogen biosynthesis. Functionally, synthesizes alpha-1,4-glucan chains using ADP-glucose. This Bordetella parapertussis (strain 12822 / ATCC BAA-587 / NCTC 13253) protein is Glycogen synthase.